We begin with the raw amino-acid sequence, 525 residues long: Neuropilin and tolloid-like protein 2 (525 aa).

An N-terminal signal peptide occupies residues 1–22; that stretch reads MALERLCSVLKVLLITVLVVEG. At 23-347 the chain is on the extracellular side; it reads IAVAQKTQDG…GVFEQITKTH (325 aa). 7 disulfides stabilise this stretch: C45-C72, C100-C122, C177-C207, C234-C256, C297-C309, C304-C322, and C316-C331. CUB domains are found at residues 45–159 and 177–292; these read CGIW…YSFI and CQFE…FTSF. Residues 296 to 332 form the LDL-receptor class A domain; the sequence is PCTSSTFFCHSNMCINNSLVCNGVQNCAYPWDENHCK. A glycan (N-linked (GlcNAc...) asparagine) is linked at N311. The chain crosses the membrane as a helical span at residues 348–368; that stretch reads GTIIGITSGIVLVLLIISILV. The Cytoplasmic segment spans residues 369-525; that stretch reads QVKQPRKKVM…SAQASISIDF (157 aa). The residue at position 409 (S409) is a Phosphoserine.

In terms of assembly, interacts with GRIK2 and GRIK3, but neither with AMPA-nor with NMDA-sensitive glutamate receptors. N-glycosylated.

The protein resides in the membrane. Functionally, accessory subunit of neuronal kainate-sensitive glutamate receptors, GRIK2 and GRIK3. Increases kainate-receptor channel activity, slowing the decay kinetics of the receptors, without affecting their expression at the cell surface, and increasing the open probability of the receptor channels. Modulates the agonist sensitivity of kainate receptors. Slows the decay of kainate receptor-mediated excitatory postsynaptic currents (EPSCs), thus directly influencing synaptic transmission. The chain is Neuropilin and tolloid-like protein 2 (NETO2) from Homo sapiens (Human).